Here is a 102-residue protein sequence, read N- to C-terminus: Small ribosomal subunit protein uS10 (102 aa).

Belongs to the universal ribosomal protein uS10 family. Part of the 30S ribosomal subunit.

Involved in the binding of tRNA to the ribosomes. The polypeptide is Small ribosomal subunit protein uS10 (Cereibacter sphaeroides (strain ATCC 17029 / ATH 2.4.9) (Rhodobacter sphaeroides)).